A 285-amino-acid polypeptide reads, in one-letter code: Putative ankyrin repeat protein R551 (285 aa).

ANK repeat units follow at residues 99–129, 157–186, 188–214, and 215–249; these read DLKS…PIKI, NDFD…LQDE, IGKI…EAFR, and SAPD…CIQQ.

The sequence is that of Putative ankyrin repeat protein R551 from Acanthamoeba polyphaga (Amoeba).